Consider the following 196-residue polypeptide: Corticoliberin (196 aa).

An N-terminal signal peptide occupies residues 1–24 (MRLPLLVSAGVLLVALLPCPPCRA). Residues 25–153 (LLSRGPVPGA…HQEAPERERR (129 aa)) constitute a propeptide that is removed on maturation. Disordered regions lie at residues 32 to 61 (PGAR…QPQA), 85 to 105 (APLS…PSPE), and 136 to 158 (GARN…EEPP). Composition is skewed to low complexity over residues 38 to 47 (PQHPQPLDFF) and 85 to 104 (APLS…RPSP). Basic and acidic residues predominate over residues 146-156 (EAPERERRSEE). An Isoleucine amide modification is found at Ile194.

The protein belongs to the sauvagine/corticotropin-releasing factor/urotensin I family. In terms of assembly, interacts (via C-terminus) with CRFR1 (via N-terminal extracellular domain). In terms of tissue distribution, produced by the hypothalamus and placenta.

It localises to the secreted. In terms of biological role, hormone regulating the release of corticotropin from pituitary gland. Induces NLRP6 in intestinal epithelial cells, hence may influence gut microbiota profile. The chain is Corticoliberin (CRH) from Homo sapiens (Human).